The sequence spans 367 residues: Glutamate 5-kinase (367 aa).

K8 lines the ATP pocket. Positions 49, 136, and 148 each coordinate substrate. ATP-binding positions include 168–169 (TD) and 210–216 (TGGMATK). A PUA domain is found at 275-353 (TGKLYLDRGA…EEIPTILGYS (79 aa)).

It belongs to the glutamate 5-kinase family.

The protein localises to the cytoplasm. The catalysed reaction is L-glutamate + ATP = L-glutamyl 5-phosphate + ADP. It functions in the pathway amino-acid biosynthesis; L-proline biosynthesis; L-glutamate 5-semialdehyde from L-glutamate: step 1/2. Functionally, catalyzes the transfer of a phosphate group to glutamate to form L-glutamate 5-phosphate. The sequence is that of Glutamate 5-kinase from Cyanothece sp. (strain PCC 7425 / ATCC 29141).